The sequence spans 366 residues: Ribosomal RNA large subunit methyltransferase M (366 aa).

Residues Ser-188, 221-224, Asp-240, Asp-260, and Asp-277 contribute to the S-adenosyl-L-methionine site; that span reads CPGG. The active-site Proton acceptor is the Lys-306.

The protein belongs to the class I-like SAM-binding methyltransferase superfamily. RNA methyltransferase RlmE family. RlmM subfamily. As to quaternary structure, monomer.

It localises to the cytoplasm. It catalyses the reaction cytidine(2498) in 23S rRNA + S-adenosyl-L-methionine = 2'-O-methylcytidine(2498) in 23S rRNA + S-adenosyl-L-homocysteine + H(+). Functionally, catalyzes the 2'-O-methylation at nucleotide C2498 in 23S rRNA. This chain is Ribosomal RNA large subunit methyltransferase M, found in Shigella boydii serotype 4 (strain Sb227).